The following is a 476-amino-acid chain: Adenylyl cyclase-associated protein 2 (476 aa).

The interval Ser223–Pro322 is disordered. Residues Gly230 to Phe247 are compositionally biased toward pro residues. Polar residues predominate over residues Lys288–Arg299. 2 positions are modified to phosphoserine: Ser300 and Ser308. Over residues Ser300–Pro317 the composition is skewed to low complexity. The C-CAP/cofactor C-like domain occupies Pro317–Ile454.

The protein belongs to the CAP family. In terms of tissue distribution, expressed in the heart, skeletal muscle, and brain.

The protein resides in the cell membrane. Involved in the regulation of actin polymerization. The polypeptide is Adenylyl cyclase-associated protein 2 (Cap2) (Mus musculus (Mouse)).